The sequence spans 591 residues: PE-PGRS family protein PE_PGRS5 (591 aa).

In terms of domain architecture, PE spans 1 to 93 (MSFVIAQPEM…AGAYASAEAA (93 aa)). The tract at residues 94–591 (NAGPNMLAAV…GGKGNNGNPG (498 aa)) is PGRS. Composition is skewed to gly residues over residues 303-324 (GAGG…GNGG), 336-363 (ASGG…GHVS), 371-412 (GAGG…GDGG), 477-491 (SEAG…GGDG), 539-567 (AGTG…GVNG), and 579-591 (GATG…GNPG). Disordered regions lie at residues 303–412 (GAGG…GDGG), 468–491 (GSVN…GGDG), and 539–591 (AGTG…GNPG).

The protein belongs to the mycobacterial PE family. PGRS subfamily. As to quaternary structure, interacts with human TLR4.

Its subcellular location is the host endoplasmic reticulum. In terms of biological role, involved in endoplasmic reticulum (ER) stress-mediated apoptosis through human Toll-like receptor 4 (TLR4) signaling pathway. Localizes to the host ER, leading to ER stress, disruption of intracellular Ca(2+) homeostasis and increase of nitric oxide (NO) and reactive oxygen species (ROS) levels. Stress response results in caspase-8 activation and apoptosis of macrophage cells. Apoptosis may lead to dissemination of the bacteria, thereby spreading the disease. This Mycobacterium tuberculosis (strain ATCC 25618 / H37Rv) protein is PE-PGRS family protein PE_PGRS5.